Reading from the N-terminus, the 456-residue chain is MEIYLDNLWDQVLERLQLQLSKPTFETWIKTATAEQLENNCLVIRAPNPFARNWLQKYYIKTIADVVHDILGYPVEIYLTTFLVEDSRKNDSGLIWSEHKSVNILGENLSIPKPLPANLNAKYMFSRFVVGPNNRMAHAASLAVAESPGQEFNPLFLCGGVGLGKTHLMQAIGHYRLDIFPHSQIFYVSTEKFTNDLIAAIRKDSLQGFREHYRAADVLLVDDIQFIEGKEYTQEEFFHTFNTLHEAGKQVVLASDRPPNQIPSLQERLCSRFSMGLIADIQAPDLETRMAILLKKSEYENMVLPRDVIEYIATRYPSNIRELEGALTRVVTYISISGLPMTVENIAPILNPKTEKLEASPEAVIKVVSENFNLSIEDLKGSSRKREITLARQVGMYLMRQHTDLSLPKIGEVFGGKDHTTVLYSCDKISQLQNSDLNLVQTIRQLSDRINFSSRH.

The segment at 1-73 (MEIYLDNLWD…ADVVHDILGY (73 aa)) is domain I, interacts with DnaA modulators. The segment at 73–117 (YPVEIYLTTFLVEDSRKNDSGLIWSEHKSVNILGENLSIPKPLPA) is domain II. A domain III, AAA+ region region spans residues 118–334 (NLNAKYMFSR…GALTRVVTYI (217 aa)). ATP contacts are provided by G162, G164, K165, and T166. The segment at 335 to 456 (SISGLPMTVE…SDRINFSSRH (122 aa)) is domain IV, binds dsDNA.

It belongs to the DnaA family. Oligomerizes as a right-handed, spiral filament on DNA at oriC.

It is found in the cytoplasm. Plays an essential role in the initiation and regulation of chromosomal replication. ATP-DnaA binds to the origin of replication (oriC) to initiate formation of the DNA replication initiation complex once per cell cycle. Binds the DnaA box (a 9 base pair repeat at the origin) and separates the double-stranded (ds)DNA. Forms a right-handed helical filament on oriC DNA; dsDNA binds to the exterior of the filament while single-stranded (ss)DNA is stabiized in the filament's interior. The ATP-DnaA-oriC complex binds and stabilizes one strand of the AT-rich DNA unwinding element (DUE), permitting loading of DNA polymerase. After initiation quickly degrades to an ADP-DnaA complex that is not apt for DNA replication. Binds acidic phospholipids. This Trichodesmium erythraeum (strain IMS101) protein is Chromosomal replication initiator protein DnaA.